The primary structure comprises 865 residues: MALQTPMMKQYLEIKAQYKDAFLFFRLGDFYELFLDDAVKAAQELEITLTGRGKGEERIPMCGVPYHSADHYISRLLEKGYKIAICEQVEDPKNAKGVVKREVIKLITPGTIMDGKLIVEKENNFLCAVTRFEDQSYGIARADLTTGESRVSLVSEQDDLFHELASSSIKEVVLSPGWTEEDAHRLRQSLSVTLSEEEAEDLPKGYESLCENVEQPKLLRAFGRLLQYLLRTQKRSLEHLQPVQYDPPNEVMKIDLHSRRNLELVETLREKKKKGSLLWAVDETVTAMGGRLLKQWVERPLLSKKEIERRQGLVQSFLDHYFEREELRDELRHVYDLERLVGKVAYGNVNARELVQLRKSLQRIPAIFALVEKIGNQDVNERLQTIDRCESLVDLLEHSLVDDPPVSIKEGGMIRDGFHKELDTYRDASRNGKSWIAELEQKEREATGIKSLKIGYNKVFGYYIEVTKANIHLLEEGRYERKQTLTNAERYVTPELKEKEALILNAEESIVQLEYDLFLQVREQVKDYIRPLQALAQMISELDVIQGFATVSETHHYVRPALQEDRAIAIKGGRHPVVERVIPNGEYVANDVDMKDGRSILLITGPNMAGKSTYMRQLALIAIMGQIGCFVPADEARLPIFDQVFTRIGAADDLASGQSTFMVEMLETKYALQKATQNSLILLDEIGRGTSTYDGMALAQAIIEYIHDEIRAKTLFSTHYHELTALEKELSDVKNVHVSAVEEQGTVVFLHKVVDGQADRSYGIYVAELAGLPNVVTERAETLLAELEGEKEIVASEKEVASTNEPTQLSLFEPEPLEAYKPKGNKQPLSDEEKTVLHDLQSVDVLNTTPLEAIRLLNQWQQKLR.

605-612 (GPNMAGKS) lines the ATP pocket. The tract at residues 814–833 (PEPLEAYKPKGNKQPLSDEE) is disordered.

The protein belongs to the DNA mismatch repair MutS family.

Functionally, this protein is involved in the repair of mismatches in DNA. It is possible that it carries out the mismatch recognition step. This protein has a weak ATPase activity. The sequence is that of DNA mismatch repair protein MutS from Halalkalibacterium halodurans (strain ATCC BAA-125 / DSM 18197 / FERM 7344 / JCM 9153 / C-125) (Bacillus halodurans).